We begin with the raw amino-acid sequence, 401 residues long: Glycerol-3-phosphate dehydrogenase [NAD(+)] 1 (401 aa).

NAD(+) contacts are provided by residues 40-45, F128, K151, and A184; that span reads GSGNWG. K151 is a binding site for substrate. K244 serves as the catalytic Proton acceptor. NAD(+)-binding residues include R309 and Q338. 309–310 contacts substrate; the sequence is RN.

Belongs to the NAD-dependent glycerol-3-phosphate dehydrogenase family.

Its subcellular location is the cytoplasm. The catalysed reaction is sn-glycerol 3-phosphate + NAD(+) = dihydroxyacetone phosphate + NADH + H(+). The sequence is that of Glycerol-3-phosphate dehydrogenase [NAD(+)] 1 (GPD1) from Zygosaccharomyces rouxii.